Reading from the N-terminus, the 2280-residue chain is Protein Ycf2 (2280 aa).

An ATP-binding site is contributed by glycine 1631–serine 1638.

It belongs to the Ycf2 family.

The protein resides in the plastid. It localises to the chloroplast stroma. Probable ATPase of unknown function. Its presence in a non-photosynthetic plant (Epifagus virginiana) and experiments in tobacco indicate that it has an essential function which is probably not related to photosynthesis. This is Protein Ycf2 (ycf2-A) from Nicotiana tabacum (Common tobacco).